Consider the following 65-residue polypeptide: Large ribosomal subunit protein bL35 (65 aa).

Over residues 1–16 the composition is skewed to basic residues; sequence MVPKQKTHSGAKKRFK. The tract at residues 1–39 is disordered; the sequence is MVPKQKTHSGAKKRFKLTGSGSVSRARAGMRHNFEHRSS.

The protein belongs to the bacterial ribosomal protein bL35 family.

This Tropheryma whipplei (strain TW08/27) (Whipple's bacillus) protein is Large ribosomal subunit protein bL35.